Here is a 670-residue protein sequence, read N- to C-terminus: DNA ligase (670 aa).

NAD(+) is bound by residues 36-40, 84-85, and glutamate 116; these read DEEYD and SL. Lysine 118 acts as the N6-AMP-lysine intermediate in catalysis. Residues arginine 139, glutamate 177, lysine 293, and lysine 317 each contribute to the NAD(+) site. Residues cysteine 411, cysteine 414, cysteine 429, and cysteine 434 each contribute to the Zn(2+) site. A BRCT domain is found at 594–670; that stretch reads KKPSPLKGLT…SYEEFLKMLE (77 aa).

It belongs to the NAD-dependent DNA ligase family. LigA subfamily. Requires Mg(2+) as cofactor. The cofactor is Mn(2+).

The catalysed reaction is NAD(+) + (deoxyribonucleotide)n-3'-hydroxyl + 5'-phospho-(deoxyribonucleotide)m = (deoxyribonucleotide)n+m + AMP + beta-nicotinamide D-nucleotide.. Its function is as follows. DNA ligase that catalyzes the formation of phosphodiester linkages between 5'-phosphoryl and 3'-hydroxyl groups in double-stranded DNA using NAD as a coenzyme and as the energy source for the reaction. It is essential for DNA replication and repair of damaged DNA. This is DNA ligase from Thermodesulfovibrio yellowstonii (strain ATCC 51303 / DSM 11347 / YP87).